The following is an 809-amino-acid chain: Ecotropic viral integration site 5 protein (809 aa).

The interval 1–483 (MVTTKMTAAF…EAESQCALKE (483 aa)) is interaction with alpha-tubulin, gamma-tubulin, BIRC5 and FBXO5. Disordered stretches follow at residues 49 to 80 (VASP…KLSP) and 99 to 123 (DSKS…SSSA). Low complexity predominate over residues 51 to 78 (SPSASLHTTSSSTTLSTPTQSPSSPSKL). A phosphoserine mark is found at Ser-102 and Ser-113. Positions 103 to 123 (LRSVNGSRRNSGSSLVSSSSA) are enriched in low complexity. Residues 128–693 (SHLEEDSWIL…LNRSDSNQYI (566 aa)) are dimerization. The Rab-GAP TBC domain occupies 163 to 348 (GIPHHFRAIV…RIFDIFMSEG (186 aa)). The tract at residues 377-809 (QHFQKVIPHQ…PQRESYSTTV (433 aa)) is targeting to the centrosomes. Positions 406–717 (KKMKKLEKEY…RCLKGQRDFS (312 aa)) form a coiled coil. An interaction with AURKB and INCENP region spans residues 487–809 (KVLDIEKKNN…PQRESYSTTV (323 aa)). 4 positions are modified to phosphoserine: Ser-497, Ser-689, Ser-776, and Ser-778. Residues 760 to 809 (HRKSGPMSLNPALADGSESEAEDGMLGPQESDPEAPQKQPPQRESYSTTV) are disordered. A compositionally biased stretch (polar residues) spans 799–809 (PPQRESYSTTV).

As to quaternary structure, dimeric and monomeric. Interacts with alpha- and gamma-tubulin. Interacts with FBXO5. Interacts with the chromosome passenger complex (CPC) which is at least composed of AURKB/aurora-B, BIRC5/survivin, CDCA8/borealin and INCENP. Post-translationally, probably phosphorylated by PLK1; may be required for degradation during mitosis. Ubiquitinated. Degradation during prophase is ubiquitin-dependent. In terms of tissue distribution, widely expressed.

Its subcellular location is the nucleus. The protein resides in the cytoplasm. It is found in the cytoskeleton. The protein localises to the microtubule organizing center. It localises to the centrosome. Its subcellular location is the spindle. Functions as a regulator of cell cycle progression by stabilizing the FBXO5 protein and promoting cyclin-A accumulation during interphase. May play a role in cytokinesis. This Mus musculus (Mouse) protein is Ecotropic viral integration site 5 protein (Evi5).